Here is a 301-residue protein sequence, read N- to C-terminus: 33 kDa chaperonin (301 aa).

Cystine bridges form between cysteine 239–cysteine 241 and cysteine 272–cysteine 275.

This sequence belongs to the HSP33 family. Under oxidizing conditions two disulfide bonds are formed involving the reactive cysteines. Under reducing conditions zinc is bound to the reactive cysteines and the protein is inactive.

Its subcellular location is the cytoplasm. Redox regulated molecular chaperone. Protects both thermally unfolding and oxidatively damaged proteins from irreversible aggregation. Plays an important role in the bacterial defense system toward oxidative stress. This Nostoc sp. (strain PCC 7120 / SAG 25.82 / UTEX 2576) protein is 33 kDa chaperonin.